The primary structure comprises 81 residues: MKLTCVIIVVALFLTACHAKDKQEHPAVRGSDDMQDSEDLKLAKKCTVDSDFCDPDNHDCCSGRCIDEGGSGVCAIVPVLN.

The signal sequence occupies residues 1–19; that stretch reads MKLTCVIIVVALFLTACHA. Residues 20–43 constitute a propeptide that is removed on maturation; sequence KDKQEHPAVRGSDDMQDSEDLKLA. 3 disulfide bridges follow: Cys-46/Cys-61, Cys-53/Cys-65, and Cys-60/Cys-74.

The protein belongs to the conotoxin O1 superfamily. As to expression, expressed by the venom duct.

Its subcellular location is the secreted. The polypeptide is Conotoxin ArMKLT2-01 (Conus arenatus (Sand-dusted cone)).